The primary structure comprises 192 residues: ATP-dependent Clp protease proteolytic subunit 1 (192 aa).

The Nucleophile role is filled by Ser-92. The active site involves His-117.

It belongs to the peptidase S14 family. Fourteen ClpP subunits assemble into 2 heptameric rings which stack back to back to give a disk-like structure with a central cavity, resembling the structure of eukaryotic proteasomes.

It localises to the cytoplasm. The catalysed reaction is Hydrolysis of proteins to small peptides in the presence of ATP and magnesium. alpha-casein is the usual test substrate. In the absence of ATP, only oligopeptides shorter than five residues are hydrolyzed (such as succinyl-Leu-Tyr-|-NHMec, and Leu-Tyr-Leu-|-Tyr-Trp, in which cleavage of the -Tyr-|-Leu- and -Tyr-|-Trp bonds also occurs).. Cleaves peptides in various proteins in a process that requires ATP hydrolysis. Has a chymotrypsin-like activity. Plays a major role in the degradation of misfolded proteins. This is ATP-dependent Clp protease proteolytic subunit 1 from Chlamydia trachomatis serovar D (strain ATCC VR-885 / DSM 19411 / UW-3/Cx).